A 274-amino-acid polypeptide reads, in one-letter code: Cytochrome c oxidase subunit 3 (274 aa).

Helical transmembrane passes span 22-42 (PSPW…GGVM), 47-67 (FAAG…SMLL), 93-113 (GVVL…WAFF), 137-157 (PFEV…TITV), 170-190 (TILY…LQWV), 208-228 (FFVA…FLTV), and 248-268 (AAIW…VSVY).

Belongs to the cytochrome c oxidase subunit 3 family. In terms of assembly, component of the cytochrome c oxidase (complex IV, CIV), a multisubunit enzyme composed of a catalytic core of 3 subunits and several supernumerary subunits. The complex exists as a monomer or a dimer and forms supercomplexes (SCs) in the inner mitochondrial membrane with ubiquinol-cytochrome c oxidoreductase (cytochrome b-c1 complex, complex III, CIII).

The protein resides in the mitochondrion inner membrane. It catalyses the reaction 4 Fe(II)-[cytochrome c] + O2 + 8 H(+)(in) = 4 Fe(III)-[cytochrome c] + 2 H2O + 4 H(+)(out). Functionally, component of the cytochrome c oxidase, the last enzyme in the mitochondrial electron transport chain which drives oxidative phosphorylation. The respiratory chain contains 3 multisubunit complexes succinate dehydrogenase (complex II, CII), ubiquinol-cytochrome c oxidoreductase (cytochrome b-c1 complex, complex III, CIII) and cytochrome c oxidase (complex IV, CIV), that cooperate to transfer electrons derived from NADH and succinate to molecular oxygen, creating an electrochemical gradient over the inner membrane that drives transmembrane transport and the ATP synthase. Cytochrome c oxidase is the component of the respiratory chain that catalyzes the reduction of oxygen to water. Electrons originating from reduced cytochrome c in the intermembrane space (IMS) are transferred via the dinuclear copper A center (CU(A)) of subunit 2 and heme A of subunit 1 to the active site in subunit 1, a binuclear center (BNC) formed by heme A3 and copper B (CU(B)). The BNC reduces molecular oxygen to 2 water molecules using 4 electrons from cytochrome c in the IMS and 4 protons from the mitochondrial matrix. The protein is Cytochrome c oxidase subunit 3 (COX3) of Allomyces macrogynus.